The primary structure comprises 523 residues: MVVLAASIISKSGKALVSRQFVDMSRIRIEGLLAAFPKLVGTGKQHTYVETENVRYVYQPIEGLYLLLITNKQSNILEDLDTLRLLSKLVPEYSPSLDEEGVCKTAFELIFAFDEAICLGNKENVTVQQVKQYCEMESHEEKAHKLMMQSKINETRDVMKKKASELDKMKMERGKLDKGGYSAISGPRVVEKAFGDMSITGSGFGSGSGLGGLSMDMDSFASKPKGRPSAAATAPGKGLGMKLGKTQKTNQFLESLKAEGEVILEDVQPSSVQSRVSPLPPSDPVTVTIEEKLNVTVKRDGGVNNFDVQGTLALQVLNDTDGFIQLQIENQDVPGLSFKTHPNINKDLFNSQQVVGAKDPNRPFPSGQNETPLVKWRIHGMDESSLPLSVNCWPSVSGNETYVNIEYEAAEMFDLHNVVISIPLPALREAPSVRQIDGEWRYDSRNSVLEWSILLIDQSNRSGSMEFVVPPADPSTFFPISIGFSASSTFSDLKVTGIRPLKDGNPPKYSQRARLVTANYQVV.

Residues 218 to 243 form a disordered region; that stretch reads DSFASKPKGRPSAAATAPGKGLGMKL. An MHD domain is found at 282 to 523; that stretch reads SDPVTVTIEE…RLVTANYQVV (242 aa).

Belongs to the adaptor complexes medium subunit family. Delta-COP subfamily. In terms of assembly, oligomeric complex that consists of at least the alpha, beta, beta', gamma, delta, epsilon and zeta subunits.

The protein resides in the cytoplasm. It is found in the golgi apparatus membrane. Its subcellular location is the cytoplasmic vesicle. The protein localises to the COPI-coated vesicle membrane. Functionally, the coatomer is a cytosolic protein complex that binds to dilysine motifs and reversibly associates with Golgi non-clathrin-coated vesicles, which further mediate biosynthetic protein transport from the ER, via the Golgi up to the trans Golgi network. Coatomer complex is required for budding from Golgi membranes, and is essential for the retrograde Golgi-to-ER transport of dilysine-tagged proteins. In Oryza sativa subsp. japonica (Rice), this protein is Coatomer subunit delta-2.